A 137-amino-acid polypeptide reads, in one-letter code: 6,7-dimethyl-8-ribityllumazine synthase (137 aa).

5-amino-6-(D-ribitylamino)uracil is bound by residues Phe-11, 43–45, and 67–69; these read SFD and CVI. Residue 72 to 73 coordinates (2S)-2-hydroxy-3-oxobutyl phosphate; the sequence is DT. The Proton donor role is filled by His-75. Leu-100 contributes to the 5-amino-6-(D-ribitylamino)uracil binding site. Arg-115 serves as a coordination point for (2S)-2-hydroxy-3-oxobutyl phosphate.

It belongs to the DMRL synthase family. In terms of assembly, forms an icosahedral capsid composed of 60 subunits, arranged as a dodecamer of pentamers.

The enzyme catalyses (2S)-2-hydroxy-3-oxobutyl phosphate + 5-amino-6-(D-ribitylamino)uracil = 6,7-dimethyl-8-(1-D-ribityl)lumazine + phosphate + 2 H2O + H(+). The protein operates within cofactor biosynthesis; riboflavin biosynthesis; riboflavin from 2-hydroxy-3-oxobutyl phosphate and 5-amino-6-(D-ribitylamino)uracil: step 1/2. In terms of biological role, catalyzes the formation of 6,7-dimethyl-8-ribityllumazine by condensation of 5-amino-6-(D-ribitylamino)uracil with 3,4-dihydroxy-2-butanone 4-phosphate. This is the penultimate step in the biosynthesis of riboflavin. The chain is 6,7-dimethyl-8-ribityllumazine synthase from Methanococcus maripaludis (strain C5 / ATCC BAA-1333).